A 280-amino-acid polypeptide reads, in one-letter code: Threonylcarbamoyl-AMP synthase (280 aa).

The transit peptide at Met-1–Ala-56 directs the protein to the mitochondrion. Ser-61 carries the post-translational modification Phosphoserine. The 191-residue stretch at Thr-68–Ala-258 folds into the YrdC-like domain.

Belongs to the SUA5 family. In terms of assembly, interacts with RSC1A1.

The protein resides in the cytoplasm. Its subcellular location is the mitochondrion. It is found in the cell membrane. It catalyses the reaction L-threonine + hydrogencarbonate + ATP = L-threonylcarbamoyladenylate + diphosphate + H2O. Cytoplasmic and mitochondrial threonylcarbamoyl-AMP synthase required for the formation of a threonylcarbamoyl group on adenosine at position 37 (t(6)A37) in tRNAs that read codons beginning with adenine. Catalyzes the conversion of L-threonine, HCO(3)(-)/CO(2) and ATP to give threonylcarbamoyl-AMP (TC-AMP) as the acyladenylate intermediate, with the release of diphosphate. Participates in t(6)A37 formation in cytoplasmic and mitochondrial tRNAs. May regulate the activity of some transporters. This is Threonylcarbamoyl-AMP synthase from Rattus norvegicus (Rat).